Consider the following 408-residue polypeptide: UPF0761 membrane protein Avin_36810 (408 aa).

6 helical membrane-spanning segments follow: residues 33-53, 92-112, 132-152, 174-194, 209-229, and 238-258; these read YTALFAVVPIMTLIFVVLSVV, HLTWLGVGVLMVTALLMLMTV, FLLHWAILSLGPLLLGTGFAL, LLKVMPLLFSTAAFTLLYVAV, LFAAVLFEAAKGLFGLYVALF, and AFAAVPLFLLWMYLSWMIVLL.

This sequence belongs to the UPF0761 family.

Its subcellular location is the cell inner membrane. This Azotobacter vinelandii (strain DJ / ATCC BAA-1303) protein is UPF0761 membrane protein Avin_36810.